Here is a 214-residue protein sequence, read N- to C-terminus: MNIIDLGLIDFDEAYSIQERLAAEVFAGSGAETLLLLEHPPVYTIGSGGDEGNILDTAIEVRRINRGGDVTYHGPGQLVGYPVIDLARRGCDLHRYLRFIEELLMLVVADFRVAAFRSPGRTGVWTDQGKLASIGVGVRRWVTMHGFALNVTTDLTPFTRINPCGMAGCPVTSLEAEVGGNVKMIEVKARVGARFEGFLDEFMPLRDSEKDRGF.

A BPL/LPL catalytic domain is found at 28 to 203 (GSGAETLLLL…RFEGFLDEFM (176 aa)). Substrate contacts are provided by residues 66 to 73 (RGGDVTYH), 133 to 135 (SIG), and 146 to 148 (GFA). C164 acts as the Acyl-thioester intermediate in catalysis.

It belongs to the LipB family.

Its subcellular location is the cytoplasm. It catalyses the reaction octanoyl-[ACP] + L-lysyl-[protein] = N(6)-octanoyl-L-lysyl-[protein] + holo-[ACP] + H(+). It functions in the pathway protein modification; protein lipoylation via endogenous pathway; protein N(6)-(lipoyl)lysine from octanoyl-[acyl-carrier-protein]: step 1/2. In terms of biological role, catalyzes the transfer of endogenously produced octanoic acid from octanoyl-acyl-carrier-protein onto the lipoyl domains of lipoate-dependent enzymes. Lipoyl-ACP can also act as a substrate although octanoyl-ACP is likely to be the physiological substrate. This is Octanoyltransferase from Geotalea uraniireducens (strain Rf4) (Geobacter uraniireducens).